The following is a 91-amino-acid chain: uncharacterized protein (91 aa).

3 helical membrane passes run 9–29 (LIHA…YTAG), 30–50 (LGIF…VIFG), and 67–87 (WLGC…VLKF).

The protein localises to the cell membrane. This is an uncharacterized protein from Methanocaldococcus jannaschii (strain ATCC 43067 / DSM 2661 / JAL-1 / JCM 10045 / NBRC 100440) (Methanococcus jannaschii).